Here is a 92-residue protein sequence, read N- to C-terminus: Acylphosphatase (92 aa).

Positions 5–92 constitute an Acylphosphatase-like domain; the sequence is YIVAYVYGVV…TPFETFSIRY (88 aa). Residues Arg20 and Asn38 contribute to the active site.

This sequence belongs to the acylphosphatase family.

It carries out the reaction an acyl phosphate + H2O = a carboxylate + phosphate + H(+). This chain is Acylphosphatase (acyP), found in Yersinia pseudotuberculosis serotype O:1b (strain IP 31758).